The primary structure comprises 60 residues: UPF0434 protein Aave_2563 (60 aa).

The protein belongs to the UPF0434 family.

The sequence is that of UPF0434 protein Aave_2563 from Paracidovorax citrulli (strain AAC00-1) (Acidovorax citrulli).